We begin with the raw amino-acid sequence, 1514 residues long: ABC transporter C family member 3 (1514 aa).

The next 10 helical transmembrane spans lie at 35–55, 83–103, 116–136, 153–173, 183–203, 325–345, 364–386, 439–459, 463–483, and 551–571; these read PLFL…VLFF, ALFC…LSGF, LVSS…SICL, LWLV…FVMY, LLVF…VAVL, ILVT…GPAL, YVLV…HWFF, WYMH…WILY, GLAS…NFPF, and FVFW…CILL. In terms of domain architecture, ABC transmembrane type-1 1 spans 325–606; the sequence is ILVTAFFAFI…LPDTISMIVQ (282 aa). Residues 640–863 form the ABC transporter 1 domain; sequence VEVINSTLSW…GTDFMELIGA (224 aa). 675 to 682 contacts ATP; it reads GTVGSGKS. A run of 5 helical transmembrane segments spans residues 940–960, 987–1007, 1077–1097, 1181–1201, and 1205–1225; these read YITL…QVLF, LSTL…CILL, IGII…FIPV, LSSL…TGVI, and LAGL…WLIW. An ABC transmembrane type-1 2 domain is found at 950–1232; it reads VPFILLGQVL…LIWTLCNLEN (283 aa). An ABC transporter 2 domain is found at 1271–1503; sequence IRDLQVRYAP…KSSSFSKLVA (233 aa). 1303 to 1310 contributes to the ATP binding site; it reads GRTGSGKS.

The protein belongs to the ABC transporter superfamily. ABCC family. Conjugate transporter (TC 3.A.1.208) subfamily. In terms of tissue distribution, ubiquitous.

The protein localises to the membrane. It catalyses the reaction ATP + H2O + xenobioticSide 1 = ADP + phosphate + xenobioticSide 2.. Glutathione-conjugate transport is inhibited by decyl-glutathione and, to a lower extent, by GS-GS, but not by GSH. All transports are inhibited by vanadate. In terms of biological role, pump for glutathione S-conjugates. Mediates the transport of glutathione conjugates such as chlorodinitrobenzene-GS (DNB-GS), and of chlorophyll catabolites such as Bn-NCC-1. Also transports heavy metals such as cadmium (Cd). The polypeptide is ABC transporter C family member 3 (ABCC3) (Arabidopsis thaliana (Mouse-ear cress)).